A 418-amino-acid chain; its full sequence is MKREREAPSRAFSALRLAPFVYLLLIQTEPLEGVNITSPVRLIHGTVGKAALLSVQYSSTSSDKPVVKWQLKRDKPVTVVQSIGTEVIGTLRPDYRDRIRLFENGSLLLSDLQLADEGTYEVEISITDDTFTGEKTINLTVDVPISRPQVLVASTTVLELSEAFTLNCSHENGTKPSYTWLKDGKPLLNDSRMLLSPDQKVLTITRVLMEDDDLYSCVVENPISQGRSPPVKITVYRRSSLYIILSTGGIFLLVTLVTVCACWKPSKKSGKKRKLEKQNSMEYMDQSDDRLKPEADTLPRSGEQERKNPMALYILKDKDSPEPEENPASEPRSAAEPGPPGYSVSPAVPGRSPGLPIRSARRYPRSPARSPATGRTHSSPPRAPGSPGRSRSASRTLRTAGVHLIREQDEAGPVEISA.

Residues 1–33 (MKREREAPSRAFSALRLAPFVYLLLIQTEPLEG) form the signal peptide. Residues 34-141 (VNITSPVRLI…TGEKTINLTV (108 aa)) enclose the Ig-like V-type domain. Residues 34-240 (VNITSPVRLI…VKITVYRRSS (207 aa)) are Extracellular-facing. N-linked (GlcNAc...) asparagine glycans are attached at residues N35, N138, N167, and N189. An Ig-like C2-type domain is found at 148–234 (PQVLVASTTV…QGRSPPVKIT (87 aa)). An intrachain disulfide couples C168 to C217. The helical transmembrane segment at 241–261 (LYIILSTGGIFLLVTLVTVCA) threads the bilayer. At 262–418 (CWKPSKKSGK…DEAGPVEISA (157 aa)) the chain is on the cytoplasmic side. Residues 271–418 (KKRKLEKQNS…DEAGPVEISA (148 aa)) form a disordered region. S280 is modified (phosphoserine). Residues 287–308 (SDDRLKPEADTLPRSGEQERKN) are compositionally biased toward basic and acidic residues. Residues S352 and S379 each carry the phosphoserine modification. The segment covering 385–400 (GSPGRSRSASRTLRTA) has biased composition (low complexity).

In terms of assembly, homodimer. Dimer formation occurs predominantly through cis interactions on the cell surface. Part of a complex containing MLC1, TRPV4, AQP4 and ATP1B1. Interacts with CLCN2. In terms of processing, N-glycosylated.

The protein localises to the cytoplasm. Its subcellular location is the cell membrane. Involved in regulating cell motility and cell-matrix interactions. May inhibit cell growth through suppression of cell proliferation. In glia, associates and targets CLCN2 at astrocytic processes and myelinated fiber tracts where it may regulate transcellular chloride flux involved in neuron excitability. This Bos taurus (Bovine) protein is Hepatic and glial cell adhesion molecule.